A 212-amino-acid polypeptide reads, in one-letter code: 3-demethoxyubiquinol 3-hydroxylase (212 aa).

Fe cation is bound by residues glutamate 61, glutamate 91, histidine 94, glutamate 143, glutamate 175, and histidine 178.

This sequence belongs to the COQ7 family. Fe cation is required as a cofactor.

The protein localises to the cell membrane. The enzyme catalyses a 5-methoxy-2-methyl-3-(all-trans-polyprenyl)benzene-1,4-diol + AH2 + O2 = a 3-demethylubiquinol + A + H2O. It participates in cofactor biosynthesis; ubiquinone biosynthesis. Catalyzes the hydroxylation of 2-nonaprenyl-3-methyl-6-methoxy-1,4-benzoquinol during ubiquinone biosynthesis. The polypeptide is 3-demethoxyubiquinol 3-hydroxylase (Methylibium petroleiphilum (strain ATCC BAA-1232 / LMG 22953 / PM1)).